The sequence spans 327 residues: Phenylalanine--tRNA ligase alpha subunit (327 aa).

A Mg(2+)-binding site is contributed by Glu-253.

The protein belongs to the class-II aminoacyl-tRNA synthetase family. Phe-tRNA synthetase alpha subunit type 1 subfamily. Tetramer of two alpha and two beta subunits. Requires Mg(2+) as cofactor.

The protein localises to the cytoplasm. It catalyses the reaction tRNA(Phe) + L-phenylalanine + ATP = L-phenylalanyl-tRNA(Phe) + AMP + diphosphate + H(+). The sequence is that of Phenylalanine--tRNA ligase alpha subunit from Laribacter hongkongensis (strain HLHK9).